A 96-amino-acid chain; its full sequence is DNA-directed RNA polymerase subunit Rpo11 (96 aa).

Belongs to the archaeal Rpo11/eukaryotic RPB11/RPC19 RNA polymerase subunit family. In terms of assembly, part of the RNA polymerase complex.

The protein resides in the cytoplasm. It catalyses the reaction RNA(n) + a ribonucleoside 5'-triphosphate = RNA(n+1) + diphosphate. Functionally, DNA-dependent RNA polymerase (RNAP) catalyzes the transcription of DNA into RNA using the four ribonucleoside triphosphates as substrates. The chain is DNA-directed RNA polymerase subunit Rpo11 from Haloquadratum walsbyi (strain DSM 16790 / HBSQ001).